The sequence spans 430 residues: Putative cytochrome P450 139 (430 aa).

A heme-binding site is contributed by C372.

This sequence belongs to the cytochrome P450 family. Requires heme as cofactor.

In Mycobacterium bovis (strain ATCC BAA-935 / AF2122/97), this protein is Putative cytochrome P450 139 (cyp139).